Reading from the N-terminus, the 415-residue chain is Alpha-N-acetylgalactosaminidase (415 aa).

The N-terminal stretch at 1–17 (MLQKTVLLLALVAQVLM) is a signal peptide. 3 disulfides stabilise this stretch: cysteine 38/cysteine 80, cysteine 42/cysteine 49, and cysteine 127/cysteine 158. Substrate contacts are provided by residues 78 to 79 (DD) and lysine 154. Aspartate 156 (nucleophile) is an active-site residue. Residue asparagine 177 is glycosylated (N-linked (GlcNAc...) asparagine). Cysteine 187 and cysteine 209 are joined by a disulfide. Residue serine 188 participates in substrate binding. Residue asparagine 201 is glycosylated (N-linked (GlcNAc...) asparagine). Substrate is bound by residues arginine 213 and aspartate 217. The Proton donor role is filled by aspartate 217. Phosphoserine occurs at positions 322 and 332. Asparagine 385 is a glycosylation site (N-linked (GlcNAc...) asparagine).

The protein belongs to the glycosyl hydrolase 27 family. Homodimer.

It localises to the lysosome. The enzyme catalyses Cleavage of non-reducing alpha-(1-&gt;3)-N-acetylgalactosamine residues from human blood group A and AB mucin glycoproteins, Forssman hapten and blood group A lacto series glycolipids.. It catalyses the reaction a neolactoside IV(3)-alpha-GalNAc,IV(2)-alpha-Fuc-nLc4Cer(d18:1(4E)) + H2O = a neolactoside IV(2)-alpha-Fuc-nLc4Cer(d18:1(4E)) + N-acetyl-alpha-D-galactosamine. The catalysed reaction is a neolactoside IV(3)-alpha-GalNAc,IV(2)-alpha-Fuc-nLc4Cer(d18:0) + H2O = a neolactoside IV(2)-alpha-Fuc-nLc4Cer(d18:0) + N-acetyl-alpha-D-galactosamine. It carries out the reaction a globoside IV3GalNAc-Gb4Cer + H2O = N-acetyl-alpha-D-galactosamine + a globoside Gb4Cer. Removes terminal alpha-N-acetylgalactosamine residues from glycolipids and glycopeptides. Required for the breakdown of glycolipids. The sequence is that of Alpha-N-acetylgalactosaminidase (Naga) from Mus musculus (Mouse).